The sequence spans 669 residues: Coagulation factor XIII B chain (669 aa).

A signal peptide spans 1 to 21 (MMTLRHLPFILLLILSGELYA). 10 Sushi domains span residues 25 to 89 (QCDF…PRCY), 90 to 149 (KKCL…SCRK), 152 to 211 (ETCL…QCNK), 212 to 270 (LMCS…ICEG), 273 to 330 (NRCP…KCIE), 335 to 392 (VACE…ECVE), 395 to 453 (ENCK…VCLE), 454 to 517 (PCTI…PMCI), 523 to 581 (GMCA…SCLE), and 582 to 648 (PCTL…PKCT). 20 disulfide bridges follow: Cys-26–Cys-77, Cys-60–Cys-88, Cys-92–Cys-136, Cys-119–Cys-147, Cys-154–Cys-198, Cys-181–Cys-209, Cys-214–Cys-256, Cys-242–Cys-268, Cys-275–Cys-317, Cys-303–Cys-328, Cys-337–Cys-379, Cys-365–Cys-390, Cys-397–Cys-440, Cys-426–Cys-451, Cys-455–Cys-506, Cys-487–Cys-516, Cys-525–Cys-568, Cys-554–Cys-579, Cys-583–Cys-637, and Cys-617–Cys-647. N-linked (GlcNAc...) asparagine glycosylation is present at Asn-163. Asn-546 is a glycosylation site (N-linked (GlcNAc...) asparagine).

In terms of assembly, tetramer of two A chains (F13A1) and two B (F13B) chains. As to expression, predominantly expressed in liver and kidney.

It is found in the secreted. The B chain of factor XIII is not catalytically active, but is thought to stabilize the A subunits and regulate the rate of transglutaminase formation by thrombin. The sequence is that of Coagulation factor XIII B chain (F13b) from Mus musculus (Mouse).